The primary structure comprises 397 residues: N(6)-adenosine-methyltransferase non-catalytic subunit METTL14 (397 aa).

Disordered regions lie at residues 37-67 (NAED…KKTP) and 368-397 (ELLR…GRPR). The segment covering 40–51 (DINSSRQLNSGG) has biased composition (polar residues). The span at 382-397 (LRGRGRGFPRGRGRPR) shows a compositional bias: basic residues.

This sequence belongs to the MT-A70-like family. Component of the WMM complex, a N6-methyltransferase complex composed of a catalytic subcomplex, named MAC, and of an associated subcomplex, named MACOM. The MAC subcomplex is composed of Ime4/Mettl3 and Mettl14. The MACOM subcomplex is composed of fl(2)d, Flacc/Xio, Hakai, vir, and, in some cases of nito.

The protein resides in the nucleus. Functionally, non-catalytic component of the WMM complex, a complex that mediates N6-methyladenosine (m6A) methylation of mRNAs, a modification that plays a role in the efficiency of mRNA splicing and is required for sex determination. In the heterodimer formed with Ime4/Mettl3, Mettl14 constitutes the RNA-binding scaffold that recognizes the substrate rather than the catalytic core. Required for sex determination and dosage compensation via Sxl alternative splicing: m6A methylation acts as a key regulator of Sxl pre-mRNA and promotes female-specific alternative splicing of Sxl, which determines female physiognomy. M6A methylation is also required for neuronal functions. In Drosophila melanogaster (Fruit fly), this protein is N(6)-adenosine-methyltransferase non-catalytic subunit METTL14.